The sequence spans 584 residues: MTAPNRNTLWARAIADELAAAGVHAVCVCPGSRSTPLTVAVDAHDDLTVYSHLDERSAAFFALGRGKRTGAPTAVLTTSGTATANLHPAVMEAAQARIPLVVLTADRPPELRGSGANQTVDQEQLYGSAVRYYEDLPEPEVTARKLRSLRTSVCRAVGHTTGPKPGPVHLNVPFRKPLEPVSVPGDVPPSFDDDHPLAAAGRGGDTPFVSVHDGTTEPAGETAAALAAAATTAARPLVVAGPADGGAGITPDAAAALADATGAPIFADPLSGLRFGPHVGDAPVVGGYDGFLAADVPHPEFVLRFGASPTSKPLRKWLAASDARQVVVDPAGGWREAEFTATDVVAADPAATARAIAARADGTRSAWTDAVLDLEARYWAAVDDFQPAATLEGEIAATVAAGAPDPATVFVSNSMPIRDFDRFAAPRGADLAVLGNRGASGIDGVVSSALGAGSATADPVVGLVGDLAYFHDSNGLLALERCGVDATIVLVNNDGGSIFHMLPIEQFDPPFTGQFKTPHGLDFAPTADTYALSFARTDTVGEFRAAYRAALGDAGTHVIEVSTDAEASHRERERLADRVTGLSV.

The disordered stretch occupies residues 563 to 584 (TDAEASHRERERLADRVTGLSV). The segment covering 566 to 577 (EASHRERERLAD) has biased composition (basic and acidic residues).

Belongs to the TPP enzyme family. MenD subfamily. Homodimer. Requires Mg(2+) as cofactor. It depends on Mn(2+) as a cofactor. Thiamine diphosphate is required as a cofactor.

The enzyme catalyses isochorismate + 2-oxoglutarate + H(+) = 5-enolpyruvoyl-6-hydroxy-2-succinyl-cyclohex-3-ene-1-carboxylate + CO2. It participates in quinol/quinone metabolism; 1,4-dihydroxy-2-naphthoate biosynthesis; 1,4-dihydroxy-2-naphthoate from chorismate: step 2/7. Its pathway is quinol/quinone metabolism; menaquinone biosynthesis. In terms of biological role, catalyzes the thiamine diphosphate-dependent decarboxylation of 2-oxoglutarate and the subsequent addition of the resulting succinic semialdehyde-thiamine pyrophosphate anion to isochorismate to yield 2-succinyl-5-enolpyruvyl-6-hydroxy-3-cyclohexene-1-carboxylate (SEPHCHC). The polypeptide is 2-succinyl-5-enolpyruvyl-6-hydroxy-3-cyclohexene-1-carboxylate synthase (Halobacterium salinarum (strain ATCC 29341 / DSM 671 / R1)).